Here is a 184-residue protein sequence, read N- to C-terminus: Phosducin-like protein 3 (184 aa).

A thioredoxin fold region spans residues 45-184; that stretch reads HGELKEIDEQ…VKNNKFKEDD (140 aa).

It belongs to the phosducin family.

This is Phosducin-like protein 3 (phlp3) from Dictyostelium discoideum (Social amoeba).